The primary structure comprises 96 residues: Aspartyl/glutamyl-tRNA(Asn/Gln) amidotransferase subunit C (96 aa).

The protein belongs to the GatC family. As to quaternary structure, heterotrimer of A, B and C subunits.

The enzyme catalyses L-glutamyl-tRNA(Gln) + L-glutamine + ATP + H2O = L-glutaminyl-tRNA(Gln) + L-glutamate + ADP + phosphate + H(+). It carries out the reaction L-aspartyl-tRNA(Asn) + L-glutamine + ATP + H2O = L-asparaginyl-tRNA(Asn) + L-glutamate + ADP + phosphate + 2 H(+). Functionally, allows the formation of correctly charged Asn-tRNA(Asn) or Gln-tRNA(Gln) through the transamidation of misacylated Asp-tRNA(Asn) or Glu-tRNA(Gln) in organisms which lack either or both of asparaginyl-tRNA or glutaminyl-tRNA synthetases. The reaction takes place in the presence of glutamine and ATP through an activated phospho-Asp-tRNA(Asn) or phospho-Glu-tRNA(Gln). This chain is Aspartyl/glutamyl-tRNA(Asn/Gln) amidotransferase subunit C, found in Sulfurimonas denitrificans (strain ATCC 33889 / DSM 1251) (Thiomicrospira denitrificans (strain ATCC 33889 / DSM 1251)).